Here is a 565-residue protein sequence, read N- to C-terminus: Ubiquitin carboxyl-terminal hydrolase 39 (565 aa).

Basic and acidic residues-rich tracts occupy residues 1-21 and 28-39; these read MSGR…ESES and VKRERDREREPE. Disordered stretches follow at residues 1-61 and 75-96; these read MSGR…SARE and EREV…GRVD. A Phosphoserine modification is found at Ser-46. A Glycyl lysine isopeptide (Lys-Gly) (interchain with G-Cter in SUMO2) cross-link involves residue Lys-51. Position 82 is a phosphoserine (Ser-82). The span at 85–96 shows a compositional bias: basic and acidic residues; that stretch reads EREVRAKNGRVD. The segment at 103–200 adopts a UBP-type; degenerate zinc-finger fold; the sequence is RHCPYLDTIN…YVLKPTFTKQ (98 aa). Zn(2+) is bound by residues Cys-136, Cys-139, His-155, and His-161. The USP domain maps to 225 to 555; the sequence is VGLNNIKAND…EAYIQIWKRR (331 aa).

The protein belongs to the peptidase C19 family. The U4/U6-U5 tri-snRNP complex is a building block of the precatalytic spliceosome (spliceosome B complex). Component of the U4/U6-U5 tri-snRNP complex composed of the U4, U6 and U5 snRNAs and at least PRPF3, PRPF4, PRPF6, PRPF8, PRPF31, SNRNP200, TXNL4A, SNRNP40, SNRPB, SNRPD1, SNRPD2, SNRPD3, SNRPE, SNRPF, SNRPG, DDX23, CD2BP2, PPIH, SNU13, EFTUD2, SART1 and USP39, plus LSM2, LSM3, LSM4, LSM5, LSM6, LSM7 and LSM8.

Its subcellular location is the nucleus. It carries out the reaction Thiol-dependent hydrolysis of ester, thioester, amide, peptide and isopeptide bonds formed by the C-terminal Gly of ubiquitin (a 76-residue protein attached to proteins as an intracellular targeting signal).. Functionally, deubiquitinating enzyme that plays a role in many cellular processes including cellular antiviral response, epithelial morphogenesis, DNA repair or B-cell development. Plays a role in pre-mRNA splicing as a component of the U4/U6-U5 tri-snRNP, one of the building blocks of the precatalytic spliceosome. Specifically regulates immunoglobulin gene rearrangement in a spliceosome-dependent manner, which involves modulating chromatin interactions at the Igh locus and therefore plays an essential role in B-cell development. Regulates AURKB mRNA levels, and thereby plays a role in cytokinesis and in the spindle checkpoint. Regulates apoptosis and G2/M cell cycle checkpoint in response to DNA damage by deubiquitinating and stabilizing CHK2. Also plays an important role in DNA repair by controlling the recruitment of XRCC4/LIG4 to DNA double-strand breaks for non-homologous end-joining repair. Participates in antiviral activity by affecting the type I IFN signaling by stabilizing STAT1 and decreasing its 'Lys-6'-linked ubiquitination. Contributes to non-canonical Wnt signaling during epidermal differentiation. Acts as a negative regulator NF-kappa-B activation through deubiquitination of 'Lys-48'-linked ubiquitination of NFKBIA. This chain is Ubiquitin carboxyl-terminal hydrolase 39 (USP39), found in Pongo abelii (Sumatran orangutan).